The following is an 887-amino-acid chain: DNA gyrase subunit A (887 aa).

Residues Leu35–Leu501 form the Topo IIA-type catalytic domain. The active-site O-(5'-phospho-DNA)-tyrosine intermediate is the Tyr123. The GyrA-box signature appears at Gln528–Gly534. Positions Lys811–Arg865 are disordered. Residues Asp813–Gln823 are compositionally biased toward acidic residues.

It belongs to the type II topoisomerase GyrA/ParC subunit family. Heterotetramer, composed of two GyrA and two GyrB chains. In the heterotetramer, GyrA contains the active site tyrosine that forms a transient covalent intermediate with DNA, while GyrB binds cofactors and catalyzes ATP hydrolysis.

It is found in the cytoplasm. The enzyme catalyses ATP-dependent breakage, passage and rejoining of double-stranded DNA.. In terms of biological role, a type II topoisomerase that negatively supercoils closed circular double-stranded (ds) DNA in an ATP-dependent manner to modulate DNA topology and maintain chromosomes in an underwound state. Negative supercoiling favors strand separation, and DNA replication, transcription, recombination and repair, all of which involve strand separation. Also able to catalyze the interconversion of other topological isomers of dsDNA rings, including catenanes and knotted rings. Type II topoisomerases break and join 2 DNA strands simultaneously in an ATP-dependent manner. The chain is DNA gyrase subunit A from Staphylococcus aureus (strain MSSA476).